The following is a 292-amino-acid chain: Elongation factor Ts (292 aa).

Residues 82 to 85 (TDFV) form an involved in Mg(2+) ion dislocation from EF-Tu region.

Belongs to the EF-Ts family.

The protein resides in the cytoplasm. Its function is as follows. Associates with the EF-Tu.GDP complex and induces the exchange of GDP to GTP. It remains bound to the aminoacyl-tRNA.EF-Tu.GTP complex up to the GTP hydrolysis stage on the ribosome. The protein is Elongation factor Ts of Legionella pneumophila (strain Paris).